An 811-amino-acid chain; its full sequence is Methionine--tRNA ligase (811 aa).

The short motif at 11-21 (PYVNNVPHLGN) is the 'HIGH' region element. 4 residues coordinate Zn(2+): Cys142, Cys145, Cys155, and Cys158. Residues 344-348 (KFSKS) carry the 'KMSKS' region motif. Lys347 provides a ligand contact to ATP. The disordered stretch occupies residues 606-640 (GVSVPRTAQMPTGMNKKETDAQQKKEEREMPPPSD). Residues 620–635 (NKKETDAQQKKEEREM) are compositionally biased toward basic and acidic residues. One can recognise a tRNA-binding domain in the interval 648-753 (FSERVVLKVA…PWALPGERAT (106 aa)).

The protein belongs to the class-I aminoacyl-tRNA synthetase family. MetG type 1 subfamily. As to quaternary structure, homodimer. Requires Zn(2+) as cofactor.

It localises to the cytoplasm. It carries out the reaction tRNA(Met) + L-methionine + ATP = L-methionyl-tRNA(Met) + AMP + diphosphate. Functionally, is required not only for elongation of protein synthesis but also for the initiation of all mRNA translation through initiator tRNA(fMet) aminoacylation. This chain is Methionine--tRNA ligase, found in Treponema pallidum (strain Nichols).